A 107-amino-acid polypeptide reads, in one-letter code: Thiosulfate sulfurtransferase GlpE (107 aa).

Residues 16 to 104 (KKRDIVIADV…WKAHHPTSDA (89 aa)) form the Rhodanese domain. Cys-64 serves as the catalytic Cysteine persulfide intermediate.

The protein belongs to the GlpE family.

Its subcellular location is the cytoplasm. It catalyses the reaction thiosulfate + hydrogen cyanide = thiocyanate + sulfite + 2 H(+). It carries out the reaction thiosulfate + [thioredoxin]-dithiol = [thioredoxin]-disulfide + hydrogen sulfide + sulfite + 2 H(+). Transferase that catalyzes the transfer of sulfur from thiosulfate to thiophilic acceptors such as cyanide or dithiols. May function in a CysM-independent thiosulfate assimilation pathway by catalyzing the conversion of thiosulfate to sulfite, which can then be used for L-cysteine biosynthesis. This is Thiosulfate sulfurtransferase GlpE from Coxiella burnetii (strain CbuK_Q154) (Coxiella burnetii (strain Q154)).